The following is a 113-amino-acid chain: UPF0482 protein CKO_01577 (113 aa).

Residues 1–28 (MNNTLSKRLCLTAMLALGAVVYTTSAFA) form the signal peptide. The tract at residues 44–67 (RQHAAMEKEQWNDTRSLRQKVNTR) is disordered. Over residues 47–59 (AAMEKEQWNDTRS) the composition is skewed to basic and acidic residues.

The protein belongs to the UPF0482 family.

This chain is UPF0482 protein CKO_01577, found in Citrobacter koseri (strain ATCC BAA-895 / CDC 4225-83 / SGSC4696).